Here is a 179-residue protein sequence, read N- to C-terminus: MIFYLHGFDATSPGNHEKMRQLQFIDPDVRLISYSTLHPKHDMQHLLKEVAKQMQYSDDPAPLMVGVGLGAYWAERIGFLNGLKSVLINPNLHPEETMQGKIDRPEEYADIANKCVSEFRLKNTHKAMCILSRVDDVLDSQATAEALKPYYPIEWDEIQPHKFPQLATYLPKIKAFKLG.

This sequence belongs to the UPF0227 family.

The chain is UPF0227 protein Shewmr7_1806 from Shewanella sp. (strain MR-7).